We begin with the raw amino-acid sequence, 315 residues long: Transaldolase (315 aa).

The Schiff-base intermediate with substrate role is filled by K125.

Belongs to the transaldolase family. Type 1 subfamily. As to quaternary structure, homodimer.

The protein localises to the cytoplasm. The catalysed reaction is D-sedoheptulose 7-phosphate + D-glyceraldehyde 3-phosphate = D-erythrose 4-phosphate + beta-D-fructose 6-phosphate. It participates in carbohydrate degradation; pentose phosphate pathway; D-glyceraldehyde 3-phosphate and beta-D-fructose 6-phosphate from D-ribose 5-phosphate and D-xylulose 5-phosphate (non-oxidative stage): step 2/3. Functionally, transaldolase is important for the balance of metabolites in the pentose-phosphate pathway. This chain is Transaldolase, found in Polaromonas naphthalenivorans (strain CJ2).